Reading from the N-terminus, the 281-residue chain is tRNA uridine(34) hydroxylase (281 aa).

In terms of domain architecture, Rhodanese spans 121–214 (SQPDVLVIDT…YLEKTHNKSG (94 aa)). The active-site Cysteine persulfide intermediate is the cysteine 174.

Belongs to the TrhO family.

The catalysed reaction is uridine(34) in tRNA + AH2 + O2 = 5-hydroxyuridine(34) in tRNA + A + H2O. In terms of biological role, catalyzes oxygen-dependent 5-hydroxyuridine (ho5U) modification at position 34 in tRNAs. This Wolbachia pipientis subsp. Culex pipiens (strain wPip) protein is tRNA uridine(34) hydroxylase.